The sequence spans 230 residues: Bidirectional sugar transporter SWEET16 (230 aa).

Over 1–3 the chain is Extracellular; the sequence is MAD. Residues 4-24 form a helical membrane-spanning segment; sequence LSFYVGVIGNVISVLVFLSPV. The 87-residue stretch at 6–92 folds into the MtN3/slv 1 domain; the sequence is FYVGVIGNVI…LIFLFFVPKS (87 aa). At 25–40 the chain is on the cytoplasmic side; that stretch reads ETFWRIVQRRSTEEYE. A helical membrane pass occupies residues 41 to 61; the sequence is CFPYICTLMSSSLWTYYGIVT. Residues 62 to 69 lie on the Extracellular side of the membrane; it reads PGEYLVST. Residues 70-90 form a helical membrane-spanning segment; it reads VNGFGALAESIYVLIFLFFVP. Residues 91–93 are Cytoplasmic-facing; sequence KSR. Residues 94–114 traverse the membrane as a helical segment; it reads FLKTVVVVLALNVCFPVIAIA. At 115–128 the chain is on the extracellular side; it reads GTRTLFGDANSRSS. Residues 129–149 traverse the membrane as a helical segment; that stretch reads SMGFICATLNIIMYGSPLSAI. The region spanning 129-212 is the MtN3/slv 2 domain; it reads SMGFICATLN…LLIYAYYRNA (84 aa). The Cytoplasmic portion of the chain corresponds to 150-162; the sequence is KTVVTTRSVQFMP. Residues 163–183 form a helical membrane-spanning segment; it reads FWLSFFLFLNGAIWGVYALLL. Topologically, residues 184 to 185 are extracellular; that stretch reads HD. A helical transmembrane segment spans residues 186–206; sequence MFLLVPNGMGFFLGIMQLLIY. Residues 207-230 lie on the Cytoplasmic side of the membrane; it reads AYYRNAEPIVEDEEGLIPNQPLLA.

The protein belongs to the SWEET sugar transporter family. As to quaternary structure, forms homooligomers and heterooligomers with SWEET1, SWEET7, SWEET8, SWEET9 and SWEET17. Mostly expressed in the cortex of mature roots, and, to a lower extent, in aerial organs such as leaves, stems, and flowers. Mainly present in vascular parenchyma cells, especially in the petiole vasculature, flower stalks and at the base of individual, not fully developed flowers.

Its subcellular location is the vacuole membrane. Functionally, mediates both low-affinity uptake and efflux of sugar across the vacuolar membrane. Regulates sugars homeostasis in leaves and roots by exporting/importing them through the tonoplast regarding metabolic demand. Acts as a vacuolar hexose transporter, such as glucose (Glc), fructose (Fru), and sucrose (Suc). This is Bidirectional sugar transporter SWEET16 from Arabidopsis thaliana (Mouse-ear cress).